Reading from the N-terminus, the 310-residue chain is MEYPAPAAVQAADGGGAGPYNSSELLEGQEPDGVRFDRERARRLWEAVSGAQPVGREEVEHMIQKNQCLFTNTQCKVCCALLISESQKLAHYQSKKHANKVKRYLAIHGMETLKGETKKLDSDQKSSRSKDKNQCCPICNMTFSSPVVAQSHYLGKTHAKNLKLKQQSTKVEALSKRLTNPFLVASTLALHQNREMIDPDKFCSLCHATFNDPVMAQQHYVGKKHRKQETKLKLMARYGRLADPAVTDFPAGKGYPCKTCKIVLNSIEQYQAHVSGFKHKNQSPKTVASSLGQIPMQRQPIQKDSTTLED.

An N-acetylmethionine modification is found at methionine 1. Residues 1–12 (MEYPAPAAVQAA) are compositionally biased toward low complexity. Positions 1–33 (MEYPAPAAVQAADGGGAGPYNSSELLEGQEPDG) are disordered. The segment at 70–104 (FTNTQCKVCCALLISESQKLAHYQSKKHANKVKRY) adopts a Matrin-type 1 zinc-finger fold. 4 residues coordinate Zn(2+): cysteine 75, cysteine 78, histidine 91, and histidine 97. Lysine 114 is covalently cross-linked (Glycyl lysine isopeptide (Lys-Gly) (interchain with G-Cter in SUMO2)). The Matrin-type 2 zinc-finger motif lies at 131 to 165 (DKNQCCPICNMTFSSPVVAQSHYLGKTHAKNLKLK). Residues cysteine 136, cysteine 139, histidine 152, and histidine 158 each coordinate Zn(2+). Lysine 170 participates in a covalent cross-link: Glycyl lysine isopeptide (Lys-Gly) (interchain with G-Cter in SUMO2). Matrin-type zinc fingers lie at residues 198-232 (DPDK…ETKL) and 252-286 (GKGY…SPKT). A disordered region spans residues 278-310 (KHKNQSPKTVASSLGQIPMQRQPIQKDSTTLED). 2 stretches are compositionally biased toward polar residues: residues 283-292 (SPKTVASSLG) and 299-310 (QPIQKDSTTLED).

In terms of assembly, forms a heteromeric complex with XPO5 and ILF3. Found in a nuclear export complex with XPO5, RAN, ILF3, ZNF346 and double-stranded RNA. Interacts with XPO5. Interacts with ILF3 in an RNA-independent manner.

It is found in the nucleus. The protein resides in the nucleolus. The protein localises to the cytoplasm. Functionally, binds with low affinity to dsDNA and ssRNA, and with high affinity to dsRNA, with no detectable sequence specificity. In Pongo abelii (Sumatran orangutan), this protein is Zinc finger protein 346 (ZNF346).